Here is a 957-residue protein sequence, read N- to C-terminus: Protein translocase subunit SecA (957 aa).

Residues Gln87, 105 to 109 (GEGKT), and Asp512 each bind ATP. Positions 924 to 957 (AAPAQAPSKSKRSAGRNDPCPCGSGQKYKKCCGK) are disordered. 4 residues coordinate Zn(2+): Cys943, Cys945, Cys954, and Cys955.

The protein belongs to the SecA family. As to quaternary structure, monomer and homodimer. Part of the essential Sec protein translocation apparatus which comprises SecA, SecYEG and auxiliary proteins SecDF-YajC and YidC. Requires Zn(2+) as cofactor.

The protein localises to the cell inner membrane. It localises to the cytoplasm. It carries out the reaction ATP + H2O + cellular proteinSide 1 = ADP + phosphate + cellular proteinSide 2.. Its function is as follows. Part of the Sec protein translocase complex. Interacts with the SecYEG preprotein conducting channel. Has a central role in coupling the hydrolysis of ATP to the transfer of proteins into and across the cell membrane, serving as an ATP-driven molecular motor driving the stepwise translocation of polypeptide chains across the membrane. The sequence is that of Protein translocase subunit SecA from Geobacter sp. (strain M21).